A 432-amino-acid chain; its full sequence is Adenosylhomocysteinase (432 aa).

Positions 56, 131, and 156 each coordinate substrate. 157-159 contributes to the NAD(+) binding site; sequence TTT. Substrate-binding residues include K186 and D190. NAD(+)-binding positions include 222–227, E243, N248, 299–301, N346, H353, K426, 426–430, and Y430; these read GDVGKG, IGH, and KPDHY.

It belongs to the adenosylhomocysteinase family. Interacts with AhcyL1; the interaction may negatively regulate Ahcy catalytic activity. The cofactor is NAD(+).

The catalysed reaction is S-adenosyl-L-homocysteine + H2O = L-homocysteine + adenosine. The protein operates within amino-acid biosynthesis; L-homocysteine biosynthesis; L-homocysteine from S-adenosyl-L-homocysteine: step 1/1. Adenosylhomocysteine is a competitive inhibitor of S-adenosyl-L-methionine-dependent methyl transferase reactions; therefore adenosylhomocysteinase may play a key role in the control of methylations via regulation of the intracellular concentration of adenosylhomocysteine. The chain is Adenosylhomocysteinase from Drosophila melanogaster (Fruit fly).